Consider the following 299-residue polypeptide: Ent-kaurene oxidase-like protein 1 (299 aa).

A helical membrane pass occupies residues 16-36 (AVVGVFVAAAVVGGFVAAVAL).

The protein belongs to the cytochrome P450 family. In terms of tissue distribution, expressed in roots and panicles.

Its subcellular location is the membrane. The polypeptide is Ent-kaurene oxidase-like protein 1 (Oryza sativa subsp. japonica (Rice)).